An 893-amino-acid chain; its full sequence is Protein translocase subunit SecA (893 aa).

ATP contacts are provided by residues Q87, G105–T109, and D512. Residues V840–E849 are compositionally biased toward basic and acidic residues. The tract at residues V840 to A893 is disordered. Positions Q855–T868 are enriched in polar residues. Residues C877, C879, C888, and H889 each coordinate Zn(2+). Over residues K883–A893 the composition is skewed to basic residues.

This sequence belongs to the SecA family. As to quaternary structure, monomer and homodimer. Part of the essential Sec protein translocation apparatus which comprises SecA, SecYEG and auxiliary proteins SecDF-YajC and YidC. Requires Zn(2+) as cofactor.

Its subcellular location is the cell inner membrane. It is found in the cytoplasm. It catalyses the reaction ATP + H2O + cellular proteinSide 1 = ADP + phosphate + cellular proteinSide 2.. Part of the Sec protein translocase complex. Interacts with the SecYEG preprotein conducting channel. Has a central role in coupling the hydrolysis of ATP to the transfer of proteins into and across the cell membrane, serving both as a receptor for the preprotein-SecB complex and as an ATP-driven molecular motor driving the stepwise translocation of polypeptide chains across the membrane. This chain is Protein translocase subunit SecA, found in Colwellia psychrerythraea (strain 34H / ATCC BAA-681) (Vibrio psychroerythus).